The following is a 72-amino-acid chain: Omega-conotoxin-like SVIA mutant 1 (72 aa).

Residues 1–22 (MKLTCVVIVAVLLLTACQLITA) form the signal peptide. The propeptide occupies 23 to 48 (EDSRGAQKHRTLRSTARRSKSELTTR). 3 disulfide bridges follow: cysteine 49-cysteine 63, cysteine 56-cysteine 66, and cysteine 62-cysteine 71. Residue proline 55 is modified to 4-hydroxyproline.

It belongs to the conotoxin O1 superfamily. As to expression, expressed by the venom duct.

It is found in the secreted. Omega-conotoxins act at presynaptic membranes, they bind and block voltage-gated calcium channels (Cav). This Conus striatus (Striated cone) protein is Omega-conotoxin-like SVIA mutant 1.